A 336-amino-acid polypeptide reads, in one-letter code: Transmembrane protease serine 12 (336 aa).

The signal sequence occupies residues 1-18; the sequence is MASWALSAALLCLGGAFA. At 19–312 the chain is on the extracellular side; it reads YSELHSLSLR…HYLSQGNINR (294 aa). Positions 66–306 constitute a Peptidase S1 domain; the sequence is IIGGSQADTG…FQEWMTHYLS (241 aa). Cys95 and Cys111 are joined by a disulfide. Active-site charge relay system residues include His110 and Asp159. 3 cysteine pairs are disulfide-bonded: Cys194/Cys262, Cys225/Cys241, and Cys252/Cys282. Residues Asn207, Asn237, and Asn246 are each glycosylated (N-linked (GlcNAc...) asparagine). Residue Ser256 is the Charge relay system of the active site. Residues 313–333 form a helical membrane-spanning segment; sequence LFNMDIVLGQVLTALGSVILL. The Cytoplasmic segment spans residues 334–336; it reads GVT.

It belongs to the peptidase S1 family. As to expression, exclusively expressed in the testis, from spermatocytes to elongated spermatids (at protein level).

The protein localises to the cell membrane. The protein resides in the cytoplasmic vesicle. It is found in the secretory vesicle. Its subcellular location is the acrosome. Required for male fertility. Plays a critical role in sperm capacitation and acrosome reactions during fertilization, and also plays a role in the regulation of proteins involved in spermatogenesis. Regulates protein pathways that promote chromosomal synapsis formation, double-strand break repair, formation of the inner mitochondrial membrane cristae and apoptosis in developing sperm. Required for normal sperm motility and binding to the zona pellucida, potentially via a role in ADAM3 protein maturation. The sequence is that of Transmembrane protease serine 12 from Mus musculus (Mouse).